A 46-amino-acid chain; its full sequence is Photosystem II reaction center protein K (46 aa).

Residues 1–9 (MSTLPILLA) constitute a propeptide that is removed on maturation. The helical transmembrane segment at 25–45 (LPSIPVLFLLLAFVWQAAVSF) threads the bilayer.

Belongs to the PsbK family. As to quaternary structure, PSII is composed of 1 copy each of membrane proteins PsbA, PsbB, PsbC, PsbD, PsbE, PsbF, PsbH, PsbI, PsbJ, PsbK, PsbL, PsbM, PsbT, PsbX, PsbY, PsbZ, Psb30/Ycf12, at least 3 peripheral proteins of the oxygen-evolving complex and a large number of cofactors. It forms dimeric complexes.

It is found in the plastid. It localises to the chloroplast thylakoid membrane. One of the components of the core complex of photosystem II (PSII). PSII is a light-driven water:plastoquinone oxidoreductase that uses light energy to abstract electrons from H(2)O, generating O(2) and a proton gradient subsequently used for ATP formation. It consists of a core antenna complex that captures photons, and an electron transfer chain that converts photonic excitation into a charge separation. This chain is Photosystem II reaction center protein K, found in Nephroselmis olivacea (Green alga).